The following is a 288-amino-acid chain: MDITFDHVSFTYQAGTPFAGDGIKDVSGVIRDGSYTAIIGHTGSGKSTILQHLNALLKPTSGTVTIGDKVITNETNNKNLKPLRQKVGMVFQFAENQLFEQTVAKDIAFGPQNFGVSEKDALALADKMVKMVGLPHDVLEKSPFDLSGGQMRRVAIAGVLAMQPEVLVLDEPTAGLDPSGRHEMMQMFEQLHREQGQTIVLVTHQMDDVADYADTVWVMAEGKLIKTGTPREIFADPAWLKANQLGLPKTAQLAQQLAAKGFHFDPQPLTESELADQLVPQIGGGQRG.

The 244-residue stretch at 3–246 folds into the ABC transporter domain; sequence ITFDHVSFTY…PAWLKANQLG (244 aa). Position 40-47 (40-47) interacts with ATP; sequence GHTGSGKS. Catalysis depends on Glu171, which acts as the Proton acceptor.

The protein belongs to the ABC transporter superfamily. Energy-coupling factor EcfA family. As to quaternary structure, forms a stable energy-coupling factor (ECF) transporter complex probably composed of 2 membrane-embedded substrate-binding proteins (S component), 2 ATP-binding proteins (A component) and 2 transmembrane proteins (T component). This complex interacts with a number of substrate-specific components, including FolT and ThiT for 5-formyltetrahydrofolate and thiamine respectively.

It is found in the cell membrane. Functionally, ATP-binding (A) component of a common energy-coupling factor (ECF) ABC-transporter complex. Unlike classic ABC transporters this ECF transporter provides the energy necessary to transport a number of different substrates including 5-formyltetrahydrofolate and thiamine. Expression of the complex plus FolT or ThiT in Lactococcus lactis subsp. cremoris (strain NZ9000) allows 5-formyltetrahydrofolate or thiamine uptake respectively; 5-formyltetrahydrofolate or thiamine are not taken up in the absence of FolT/ThiT or the EcfA1A2T complex. Deenergized L.lactis subsp. cremoris (treated with 2-deoxyglucose) do not take up substrate. This Lacticaseibacillus paracasei (strain ATCC 334 / BCRC 17002 / CCUG 31169 / CIP 107868 / KCTC 3260 / NRRL B-441) (Lactobacillus paracasei) protein is Energy-coupling factor transporter ATP-binding protein EcfA2.